The chain runs to 2799 residues: E3 ubiquitin-protein ligase UBR5 (2799 aa).

Threonine 2 carries the N-acetylthreonine modification. Positions 77–88 (DRLELGKPDNND) are enriched in basic and acidic residues. Positions 77 to 175 (DRLELGKPDN…DRGSGLLGSQ (99 aa)) are disordered. Polar residues predominate over residues 89–110 (GSKLNSNSGAGRTSRPGRTSDS). Serine 110 is subject to Phosphoserine. Positions 135–144 (GVGGSGGGSS) are enriched in gly residues. One can recognise a UBA domain in the interval 184-226 (VIPEELISQAQVVLQGKSRSVIIRELQRTNLDVNLAVNNLLSR). Serine 327 carries the phosphoserine modification. The span at 328-347 (FDNERGSTSKEGEPNLDKKN) shows a compositional bias: basic and acidic residues. Positions 328-352 (FDNERGSTSKEGEPNLDKKNTPVQS) are disordered. Phosphoserine occurs at positions 352 and 578. Positions 579–648 (PESLKNMEKA…APKEEEKVNE (70 aa)) are disordered. Over residues 583-604 (KNMEKASKTTEAKPESKQEPVK) the composition is skewed to basic and acidic residues. Serine 612 carries the post-translational modification Phosphoserine. A compositionally biased stretch (low complexity) spans 614–628 (ASTCSDASSIASSAS). Residue threonine 637 is modified to Phosphothreonine. 3 positions are modified to phosphoserine: serine 808, serine 928, and serine 1018. 2 disordered regions span residues 999 to 1031 (AGLG…PDPP) and 1052 to 1075 (TAAT…EPSV). Residues 1017–1031 (VSPPIAPPSWVPDPP) show a composition bias toward pro residues. A compositionally biased stretch (polar residues) spans 1052-1073 (TAATGTGQGPSTSTIPGPSTEP). 2 positions are modified to phosphothreonine: threonine 1115 and threonine 1135. A UBR-type zinc finger spans residues 1177–1245 (DTCSFTWTGA…EKCKCKTLIA (69 aa)). The Zn(2+) site is built by cysteine 1179, cysteine 1196, cysteine 1199, cysteine 1208, cysteine 1211, cysteine 1215, histidine 1216, and histidine 1219. Serine 1227 is subject to Phosphoserine. Zn(2+) contacts are provided by cysteine 1232, cysteine 1234, and cysteine 1240. Positions 1299 to 1318 (REDRNRKTASPEDSDMPDHD) are disordered. Phosphoserine occurs at positions 1308, 1355, 1375, and 1481. Residues 1515 to 1740 (SVEPLPPRPS…PSSTSTPAAS (226 aa)) are disordered. Low complexity predominate over residues 1524–1537 (SSDQSSSSSQSQSS). Positions 1538-1553 (YIIRNPQQRRISQSQP) are enriched in polar residues. Serine 1549 is modified (phosphoserine). Composition is skewed to acidic residues over residues 1559–1574 (EEQD…EVEV) and 1605–1614 (HDEDGSDMEL). Positions 1629–1638 (NHSNQDNASG) are enriched in polar residues. 3 stretches are compositionally biased toward low complexity: residues 1641–1657 (SVVT…ASSV), 1668–1681 (SNDS…SSQS), and 1726–1740 (AAST…PAAS). A Phosphothreonine modification is found at threonine 1736. Serine 1741 is subject to Phosphoserine. The residue at position 1746 (tyrosine 1746) is a Phosphotyrosine. A Phosphoserine modification is found at serine 1780. Positions 1859 to 1890 (LASAGDPGHPNHPLHASQNSARRERMTAREEA) are disordered. Residues 1879–1890 (ARRERMTAREEA) show a composition bias toward basic and acidic residues. Threonine 1969 bears the Phosphothreonine mark. Residues 1984–2021 (GIDNEDSEHENDDDTNQSATLNDKDDDSLPAETGQNHP) form a disordered region. Positions 1985–1998 (IDNEDSEHENDDDT) are enriched in acidic residues. Residues serine 1990, serine 2026, and serine 2028 each carry the phosphoserine modification. A Phosphothreonine modification is found at threonine 2030. A Phosphoserine modification is found at serine 2076. The segment at 2117–2142 (RQKKEGEEQPVLPEETESSKPGPSAH) is disordered. The residue at position 2213 (threonine 2213) is a Phosphothreonine. 2 positions are modified to phosphoserine: serine 2241 and serine 2289. The disordered stretch occupies residues 2323-2392 (HTSLMQRLRN…PSDDPEPLPA (70 aa)). Basic and acidic residues-rich tracts occupy residues 2332-2348 (NRGE…EMRR) and 2356-2368 (SRRD…RRQL). One can recognise a PABC domain in the interval 2377–2454 (PASEGNPSDD…AMELIIAHGR (78 aa)). The 338-residue stretch at 2462-2799 (LDLGLVDSSE…AIKTKNFGFV (338 aa)) folds into the HECT domain. Phosphoserine is present on residues serine 2469, serine 2484, and serine 2486. A disordered region spans residues 2473-2493 (VQQENRKRHGSSRSVVDMDLD). Catalysis depends on cysteine 2768, which acts as the Glycyl thioester intermediate.

The protein belongs to the UBR5 family. Homotetramer; composed of a dimer of dimers. Associates with CDK9 and TFIIS/TCEA1 and forms a transcription regulatory complex made of CDK9, RNAP II, UBR5 and TFIIS/TCEA1 that can stimulate target gene transcription (e.g. gamma fibrinogen/FGG) by recruiting their promoters. Associates with the E3 ligase complex containing DYRK2, EDD/UBR5, DDB1 and DCAF1 proteins (EDVP complex). Binds TOPBP1. Interacts with PIH1D1. Interacts with CIB1. As to quaternary structure, (Microbial infection) Interacts with human T-cell leukemia virus 1/HTLV-1 protein HBZ; this interaction modulates HBZ stability. As to expression, widely expressed. Most abundant in testis and expressed at high levels in brain, pituitary and kidney.

It localises to the nucleus. It is found in the cytoplasm. It carries out the reaction S-ubiquitinyl-[E2 ubiquitin-conjugating enzyme]-L-cysteine + [acceptor protein]-L-lysine = [E2 ubiquitin-conjugating enzyme]-L-cysteine + N(6)-ubiquitinyl-[acceptor protein]-L-lysine.. It participates in protein modification; protein ubiquitination. In terms of biological role, E3 ubiquitin-protein ligase involved in different protein quality control pathways in the cytoplasm and nucleus. Mainly acts as a ubiquitin chain elongator that extends pre-ubiquitinated substrates. Component of the N-end rule pathway: ubiquitinates proteins bearing specific N-terminal residues that are destabilizing according to the N-end rule, leading to their degradation. Recognizes type-1 N-degrons, containing positively charged amino acids (Arg, Lys and His). Together with UBR4, part of a cytoplasm protein quality control pathway that prevents protein aggregation by catalyzing assembly of heterotypic 'Lys-11'-/'Lys-48'-linked branched ubiquitin chains on aggregated proteins, leading to substrate recognition by the segregase p97/VCP and degradation by the proteasome: UBR5 is probably branching multiple 'Lys-48'-linked chains of substrates initially modified with mixed conjugates by UBR4. Together with ITCH, catalyzes 'Lys-48'-/'Lys-63'-branched ubiquitination of TXNIP, leading to its degradation: UBR5 mediates branching of 'Lys-48'-linked chains of substrates initially modified with 'Lys-63'-linked conjugates by ITCH. Catalytic component of a nuclear protein quality control pathway that mediates ubiquitination and degradation of unpaired transcription factors (i.e. transcription factors that are not assembled into functional multiprotein complexes): specifically recognizes and binds degrons that are not accessible when transcription regulators are associated with their coactivators. Ubiquitinates various unpaired transcription regulator (MYC, SUPT4H1, SUPT5H, CDC20 and MCRS1), as well as ligand-bound nuclear receptors (ESR1, NR1H3, NR3C1, PGR, RARA, RXRA AND VDR) that are not associated with their nuclear receptor coactivators (NCOAs). Involved in maturation and/or transcriptional regulation of mRNA by mediating polyubiquitination and activation of CDK9. Also acts as a regulator of DNA damage response by acting as a suppressor of RNF168, an E3 ubiquitin-protein ligase that promotes accumulation of 'Lys-63'-linked histone H2A and H2AX at DNA damage sites, thereby acting as a guard against excessive spreading of ubiquitinated chromatin at damaged chromosomes. Regulates DNA topoisomerase II binding protein (TopBP1) in the DNA damage response. Ubiquitinates acetylated PCK1. Acts as a positive regulator of the canonical Wnt signaling pathway by mediating (1) ubiquitination and stabilization of CTNNB1, and (2) 'Lys-48'-linked ubiquitination and degradation of TLE3. Promotes disassembly of the mitotic checkpoint complex (MCC) from the APC/C complex by catalyzing ubiquitination of BUB1B, BUB3 and CDC20. Plays an essential role in extraembryonic development. Required for the maintenance of skeletal tissue homeostasis by acting as an inhibitor of hedgehog (HH) signaling. This Homo sapiens (Human) protein is E3 ubiquitin-protein ligase UBR5 (UBR5).